The chain runs to 182 residues: Ribulose bisphosphate carboxylase small subunit, chloroplastic 1 (182 aa).

The N-terminal 42 residues, 1–42 (MASIMMNKSVVLSKECAKPLATPKVTLNKRGFATTIATKNRE), are a transit peptide targeting the chloroplast.

It belongs to the RuBisCO small chain family. As to quaternary structure, heterohexadecamer of 8 large and 8 small subunits.

The protein localises to the plastid. It localises to the chloroplast. Functionally, ruBisCO catalyzes two reactions: the carboxylation of D-ribulose 1,5-bisphosphate, the primary event in carbon dioxide fixation, as well as the oxidative fragmentation of the pentose substrate. Both reactions occur simultaneously and in competition at the same active site. Although the small subunit is not catalytic it is essential for maximal activity. The protein is Ribulose bisphosphate carboxylase small subunit, chloroplastic 1 of Acetabularia acetabulum (Mermaid's wine glass).